Reading from the N-terminus, the 571-residue chain is Urease subunit alpha (571 aa).

Residues 134-571 form the Urease domain; that stretch reads GAIDTHIHFI…LPMAQRYFLF (438 aa). The Ni(2+) site is built by His139, His141, and Lys222. Lys222 is modified (N6-carboxylysine). Residue His224 participates in substrate binding. Ni(2+)-binding residues include His251 and His277. The Proton donor role is filled by His325. Residue Asp365 coordinates Ni(2+).

Belongs to the metallo-dependent hydrolases superfamily. Urease alpha subunit family. In terms of assembly, heterotrimer of UreA (gamma), UreB (beta) and UreC (alpha) subunits. Three heterotrimers associate to form the active enzyme. The cofactor is Ni cation. In terms of processing, carboxylation allows a single lysine to coordinate two nickel ions.

Its subcellular location is the cytoplasm. It carries out the reaction urea + 2 H2O + H(+) = hydrogencarbonate + 2 NH4(+). It functions in the pathway nitrogen metabolism; urea degradation; CO(2) and NH(3) from urea (urease route): step 1/1. This chain is Urease subunit alpha, found in Bordetella parapertussis (strain 12822 / ATCC BAA-587 / NCTC 13253).